The primary structure comprises 689 residues: Bifunctional protein GAL10 (689 aa).

The segment at 1 to 345 is galactowaldenase; the sequence is MSYILVTGGA…TTKNPFGFQI (345 aa). 3–34 serves as a coordination point for NAD(+); the sequence is YILVTGGAGYIGSHTVVELVNNGYNVVVVDNL. Positions 346-689 are mutarotase; sequence NNYSWTKFDS…SYTIYRFENF (344 aa). Catalysis depends on His-534, which acts as the For mutarotase activity.

In the N-terminal section; belongs to the NAD(P)-dependent epimerase/dehydratase family. It in the C-terminal section; belongs to the aldose epimerase family. Requires NAD(+) as cofactor.

It catalyses the reaction UDP-alpha-D-glucose = UDP-alpha-D-galactose. It carries out the reaction alpha-D-glucose = beta-D-glucose. It functions in the pathway carbohydrate metabolism; galactose metabolism. The protein operates within carbohydrate metabolism; hexose metabolism. Its function is as follows. Mutarotase converts alpha-aldose to the beta-anomer. It is active on D-glucose, L-arabinose, D-xylose, D-galactose, maltose and lactose. The protein is Bifunctional protein GAL10 (GAL10) of Pachysolen tannophilus (Yeast).